A 172-amino-acid polypeptide reads, in one-letter code: Trypsin inhibitor 1B (172 aa).

2 disulfide bridges follow: Cys-40/Cys-84 and Cys-133/Cys-139.

The protein belongs to the protease inhibitor I3 (leguminous Kunitz-type inhibitor) family.

WTI-1B inhibits trypsin stoichiometrically. This chain is Trypsin inhibitor 1B, found in Psophocarpus tetragonolobus (Winged bean).